Consider the following 503-residue polypeptide: Anthranilate synthase component 1 3 (503 aa).

Residue 269–271 coordinates L-tryptophan; sequence PYS. 304–305 lines the chorismate pocket; it reads GT. A Mg(2+)-binding site is contributed by Glu-331. Chorismate-binding positions include Tyr-419, Arg-439, 453-455, and Gly-455; that span reads GSG. Residue Glu-468 coordinates Mg(2+).

Belongs to the anthranilate synthase component I family. In terms of assembly, tetramer of two components I and two components II. Mg(2+) is required as a cofactor.

It carries out the reaction chorismate + L-glutamine = anthranilate + pyruvate + L-glutamate + H(+). Its pathway is amino-acid biosynthesis; L-tryptophan biosynthesis; L-tryptophan from chorismate: step 1/5. The protein is Anthranilate synthase component 1 3 (trpE3) of Haloarcula marismortui (strain ATCC 43049 / DSM 3752 / JCM 8966 / VKM B-1809) (Halobacterium marismortui).